A 1116-amino-acid polypeptide reads, in one-letter code: Angiopoietin-1 receptor (1116 aa).

The N-terminal stretch at 1–21 (MCLLDSCTALLLLGCWMSGSA) is a signal peptide. At 22 to 745 (VRISDVTLVN…FAAHGHLLLY (724 aa)) the chain is on the extracellular side. An intrachain disulfide couples Cys-46 to Cys-106. The region spanning 46 to 126 (CVSSDWSSGG…YTYKMLQEAA (81 aa)) is the Ig-like C2-type 1 domain. 3 N-linked (GlcNAc...) asparagine glycosylation sites follow: Asn-110, Asn-143, and Asn-223. EGF-like domains are found at residues 214-256 (SCRA…HTCD), 258-302 (VCGE…LSCN), and 304-342 (ACPD…SRCE). Intrachain disulfides connect Cys-215–Cys-224, Cys-228–Cys-237, Cys-231–Cys-244, Cys-246–Cys-255, Cys-259–Cys-268, Cys-272–Cys-277, Cys-283–Cys-290, Cys-292–Cys-301, Cys-305–Cys-314, Cys-318–Cys-325, Cys-320–Cys-331, and Cys-333–Cys-341. Positions 348–438 (PVISHLRDVE…MQVEDEFTVE (91 aa)) constitute an Ig-like C2-type 2 domain. N-linked (GlcNAc...) asparagine glycans are attached at residues Asn-367, Asn-387, and Asn-425. Cys-368 and Cys-422 are joined by a disulfide. 3 Fibronectin type-III domains span residues 444–538 (RPQN…TQVL), 540–633 (LPVG…QLPP), and 634–729 (PPAN…TLPQ). 3 N-linked (GlcNAc...) asparagine glycosylation sites follow: Asn-590, Asn-637, and Asn-642. A helical transmembrane segment spans residues 746–766 (AILGSAGMTCCTVLLAFCIVL). The Cytoplasmic portion of the chain corresponds to 767-1116 (QLKRNTLQRR…GIDCSAEEAG (350 aa)). The 280-residue stretch at 816-1095 (IQFQDVLGEG…RMLEERKTYV (280 aa)) folds into the Protein kinase domain. ATP contacts are provided by residues 822–830 (LGEGNFGQV) and Lys-847. Tyr-852 is modified (phosphotyrosine; by autocatalysis). Asp-956 acts as the Proton acceptor in catalysis. Tyr-984, Tyr-1094, and Tyr-1100 each carry phosphotyrosine; by autocatalysis.

This sequence belongs to the protein kinase superfamily. Tyr protein kinase family. Tie subfamily. In terms of assembly, interacts with svep1. In terms of processing, autophosphorylated on tyrosine residues in response to ligand binding. Autophosphorylation occurs in trans, i.e. one subunit of the dimeric receptor phosphorylates tyrosine residues on the other subunit. Autophosphorylation occurs in a sequential manner, where Tyr-984 in the kinase activation loop is phosphorylated first, followed by autophosphorylation at additional tyrosine residues. Phosphorylation is important for interaction with scaffold proteins and effectors.

The protein resides in the cell membrane. It is found in the cell junction. The protein localises to the focal adhesion. It localises to the cytoplasm. Its subcellular location is the cytoskeleton. It carries out the reaction L-tyrosyl-[protein] + ATP = O-phospho-L-tyrosyl-[protein] + ADP + H(+). Its activity is regulated as follows. Angiopoietin binding leads to receptor dimerization and activation by autophosphorylation at Tyr-984 on the kinase activation loop. Its function is as follows. Tyrosine-protein kinase that acts as a cell-surface receptor for angiopoietins and regulates angiogenesis, endothelial cell survival, proliferation, migration, adhesion and cell spreading, reorganization of the actin cytoskeleton, but also maintenance of vascular quiescence. Can activate or inhibit angiogenesis, depending on the context. Angiopoietin signaling triggers receptor dimerization and autophosphorylation at specific tyrosine residues that then serve as binding sites for scaffold proteins and effectors. This chain is Angiopoietin-1 receptor, found in Danio rerio (Zebrafish).